The chain runs to 238 residues: Ribosomal RNA small subunit methyltransferase G (238 aa).

S-adenosyl-L-methionine contacts are provided by residues Gly77, Phe82, 128 to 129 (AE), and Arg147.

The protein belongs to the methyltransferase superfamily. RNA methyltransferase RsmG family.

Its subcellular location is the cytoplasm. In terms of biological role, specifically methylates the N7 position of guanine in position 535 of 16S rRNA. This Brevibacillus brevis (strain 47 / JCM 6285 / NBRC 100599) protein is Ribosomal RNA small subunit methyltransferase G.